The chain runs to 239 residues: uncharacterized protein (239 aa).

This is an uncharacterized protein from Escherichia coli O157:H7.